The primary structure comprises 198 residues: Dephospho-CoA kinase (198 aa).

In terms of domain architecture, DPCK spans 3 to 198 (LIGLTGGIAS…VDALWAGLRG (196 aa)). Residue 11–16 (ASGKST) participates in ATP binding.

Belongs to the CoaE family.

It is found in the cytoplasm. The catalysed reaction is 3'-dephospho-CoA + ATP = ADP + CoA + H(+). It participates in cofactor biosynthesis; coenzyme A biosynthesis; CoA from (R)-pantothenate: step 5/5. In terms of biological role, catalyzes the phosphorylation of the 3'-hydroxyl group of dephosphocoenzyme A to form coenzyme A. The protein is Dephospho-CoA kinase of Leifsonia xyli subsp. xyli (strain CTCB07).